Consider the following 31-residue polypeptide: Cyclotide vibi-G (31 aa).

A cross-link (cyclopeptide (Gly-Asn)) is located at residues 1–31 (GTFPCGESCVFIPCLTSAIGCSCKSKVCYKN). Cystine bridges form between C5-C21, C9-C23, and C14-C28.

In terms of processing, this is a cyclic peptide.

In terms of biological role, probably participates in a plant defense mechanism. Has cytotoxic activity, active against a human lymphoma cell line with an IC(50) of 0.96 uM. This chain is Cyclotide vibi-G, found in Viola biflora (Yellow wood violet).